The following is a 463-amino-acid chain: Perilipin-5 (463 aa).

The segment at 1-108 (MSEEEAAQIP…KLEEKLPFLQ (108 aa)) is interaction with LIPE. Positions 1-173 (MSEEEAAQIP…HFLPMTEEEL (173 aa)) are essential for lipid droplet targeting. S2, S148, and S322 each carry phosphoserine. The interval 185–463 (VGSVEDQRRQ…KHTLMPELDF (279 aa)) is interaction with PNPLA2 and ABHD5. Residues 444–463 (QEPETPSCPVKHTLMPELDF) are recruits mitochondria at the lipid droplet surface.

It belongs to the perilipin family. As to quaternary structure, homooligomer. Interacts with PNPLA2; prevents interaction of PNPLA2 with ABHD5. Interacts with ABHD5; targets ABHD5 to lipid droplets and promotes interaction of ABHD5 with PNPLA2. Interacts with LIPE. Phosphorylated by PKA. Phosphorylated on serine in skeletal muscle at rest or upon lipolytic stimulation. In terms of tissue distribution, expressed in skeletal muscle, liver, heart and kidney.

The protein resides in the lipid droplet. It localises to the cytoplasm. Its subcellular location is the mitochondrion. In terms of biological role, lipid droplet-associated protein that maintains the balance between lipogenesis and lipolysis and also regulates fatty acid oxidation in oxidative tissues. Recruits mitochondria to the surface of lipid droplets and is involved in lipid droplet homeostasis by regulating both the storage of fatty acids in the form of triglycerides and the release of fatty acids for mitochondrial fatty acid oxidation. In lipid droplet triacylglycerol hydrolysis, plays a role as a scaffolding protein for three major key lipolytic players: ABHD5, PNPLA2 and LIPE. Reduces the triacylglycerol hydrolase activity of PNPLA2 by recruiting and sequestering PNPLA2 to lipid droplets. Phosphorylation by PKA enables lipolysis probably by promoting release of ABHD5 from the perilipin scaffold and by facilitating interaction of ABHD5 with PNPLA2. Also increases lipolysis through interaction with LIPE and upon PKA-mediated phosphorylation of LIPE. The chain is Perilipin-5 (PLIN5) from Homo sapiens (Human).